A 107-amino-acid polypeptide reads, in one-letter code: Large ribosomal subunit protein P1 (107 aa).

Residues 67-107 (GAAPAAAAPAAGGAPAAGAAPKKEEKKEPSEEEDMGFSLFD) form a disordered region. Positions 69–86 (APAAAAPAAGGAPAAGAA) are enriched in low complexity.

This sequence belongs to the eukaryotic ribosomal protein P1/P2 family. In terms of assembly, P1 and P2 exist as dimers at the large ribosomal subunit.

In terms of biological role, plays an important role in the elongation step of protein synthesis. In Chlamydomonas reinhardtii (Chlamydomonas smithii), this protein is Large ribosomal subunit protein P1.